Consider the following 463-residue polypeptide: O-phospho-L-seryl-tRNA:Cys-tRNA synthase 2 (463 aa).

Pyridoxal 5'-phosphate contacts are provided by residues 154–155, N259, and 282–284; these read AR and SGH. K285 carries the N6-(pyridoxal phosphate)lysine modification.

The protein belongs to the SepCysS family. In terms of assembly, homodimer. Interacts with SepRS. Pyridoxal 5'-phosphate is required as a cofactor.

The enzyme catalyses O-phospho-L-seryl-tRNA(Cys) + hydrogen sulfide + H(+) = L-cysteinyl-tRNA(Cys) + phosphate. In terms of biological role, converts O-phospho-L-seryl-tRNA(Cys) (Sep-tRNA(Cys)) to L-cysteinyl-tRNA(Cys) (Cys-tRNA(Cys)). In Methanocella arvoryzae (strain DSM 22066 / NBRC 105507 / MRE50), this protein is O-phospho-L-seryl-tRNA:Cys-tRNA synthase 2.